Here is a 448-residue protein sequence, read N- to C-terminus: Pre-mRNA-splicing factor SAD1 (448 aa).

Methionine 1 bears the N-acetylmethionine mark. The UBP-type; degenerate zinc finger occupies 27–124 (PNYAYLETVV…NSIKFAAYPT (98 aa)). Cysteine 60, cysteine 63, histidine 79, and histidine 85 together coordinate Zn(2+). The USP domain maps to 150–447 (IGFTNAATYD…ETFIQVWEKQ (298 aa)).

Component of the 45S U1.U2.U4/U6.U5 penta-snRNP particle, a subcomplex of the spliceosome.

It is found in the nucleus. Functionally, promotes the assembly of newly synthesized U4 snRNA into the U4/U6 snRNP particle. Required for splicing of pre-mRNA. The polypeptide is Pre-mRNA-splicing factor SAD1 (SAD1) (Saccharomyces cerevisiae (strain ATCC 204508 / S288c) (Baker's yeast)).